The sequence spans 264 residues: H-2 class II histocompatibility antigen, E-Q beta chain (264 aa).

Positions 1 to 26 (MVWLPRVPCVAAVILLLTVLSPPVAL) are cleaved as a signal peptide. The beta-1 stretch occupies residues 27 to 121 (VRDSRPWFLE…IFDNFLVRRR (95 aa)). The Extracellular portion of the chain corresponds to 27-225 (VRDSRPWFLE…KAQSTSAQNK (199 aa)). 2 disulfides stabilise this stretch: C38-C106 and C144-C200. N46 carries N-linked (GlcNAc...) asparagine glycosylation. The beta-2 stretch occupies residues 122–225 (VEPTVTVYPT…KAQSTSAQNK (104 aa)). Positions 124–214 (PTVTVYPTKT…PSLTDPVTVE (91 aa)) constitute an Ig-like C1-type domain. Residues 226 to 246 (MLSGVGGFVLGLLFLGAGLFI) traverse the membrane as a helical segment. Topologically, residues 247-264 (YFRNQKGQSGLQPTGLLS) are cytoplasmic.

Belongs to the MHC class II family.

It is found in the membrane. The protein is H-2 class II histocompatibility antigen, E-Q beta chain of Mus musculus (Mouse).